A 63-amino-acid polypeptide reads, in one-letter code: Cytochrome b-c1 complex subunit 9 (63 aa).

Residues 2–21 (AAATLTSKLYSLLFRRTSTF) are Mitochondrial matrix-facing. A helical membrane pass occupies residues 22–47 (ALTIIVGVMFFERAFDQGADAIYDHI). Residues 48-63 (NEGKLWKHIKHKYENK) are Mitochondrial intermembrane-facing.

Belongs to the UQCR10/QCR9 family. As to quaternary structure, component of the ubiquinol-cytochrome c oxidoreductase (cytochrome b-c1 complex, complex III, CIII), a multisubunit enzyme composed of 11 subunits. The complex is composed of 3 respiratory subunits cytochrome b, cytochrome c1 and Rieske protein UQCRFS1, 2 core protein subunits UQCRC1/QCR1 and UQCRC2/QCR2, and 6 low-molecular weight protein subunits UQCRH/QCR6, UQCRB/QCR7, UQCRQ/QCR8, UQCR10/QCR9, UQCR11/QCR10 and subunit 9, the cleavage product of Rieske protein UQCRFS1. The complex exists as an obligatory dimer and forms supercomplexes (SCs) in the inner mitochondrial membrane with NADH-ubiquinone oxidoreductase (complex I, CI) and cytochrome c oxidase (complex IV, CIV), resulting in different assemblies (supercomplex SCI(1)III(2)IV(1) and megacomplex MCI(2)III(2)IV(2)). Interacts with STMP1.

It localises to the mitochondrion inner membrane. Functionally, component of the ubiquinol-cytochrome c oxidoreductase, a multisubunit transmembrane complex that is part of the mitochondrial electron transport chain which drives oxidative phosphorylation. The respiratory chain contains 3 multisubunit complexes succinate dehydrogenase (complex II, CII), ubiquinol-cytochrome c oxidoreductase (cytochrome b-c1 complex, complex III, CIII) and cytochrome c oxidase (complex IV, CIV), that cooperate to transfer electrons derived from NADH and succinate to molecular oxygen, creating an electrochemical gradient over the inner membrane that drives transmembrane transport and the ATP synthase. The cytochrome b-c1 complex catalyzes electron transfer from ubiquinol to cytochrome c, linking this redox reaction to translocation of protons across the mitochondrial inner membrane, with protons being carried across the membrane as hydrogens on the quinol. In the process called Q cycle, 2 protons are consumed from the matrix, 4 protons are released into the intermembrane space and 2 electrons are passed to cytochrome c. The chain is Cytochrome b-c1 complex subunit 9 (UQCR10) from Homo sapiens (Human).